Reading from the N-terminus, the 486-residue chain is MKIVIKLSPEITIKSRAIRIFFIKILITNIKTILKKNNESASIIRNWDYLEVICNHSKYQKICAMLINIPGIHHLLLIKKHMFRSLQDIYEKIILSLNYEIQLSGKSFCVRVKRCGKHNFTSQEVEHYLGNKLCQNIGNIRVNLTKPEKTIYLEIKDNQLFIIIKRYEGLGGFPIGTQQEMLSLISGGFDSAVASYMLIRRGCKVNYCFFNLGGDMHTVEVCRVIYFLWNKFSSSHKIKFISIDFSEVIKEITAKIKDNQIGVVLKRMMIRSASLVANRYKITALITGEVLGQVSSQTLSNLTLIDSVSDHVIFRPLIAYDKEKIIDLARKIGTEILSKSVPEYCGIISKKSTAKTTKQLIEFEENNFDFTVLNRAVSQSYVIDVQNIPDQIINQHVFQVETKKILDSTDVVLDIRTEIEQEKNPLYLNNIEIKKIPFYNLIDQFSKLDPNKIYLLYCDHGIMSRLQVMYLHRQGFSNVKIYRPPR.

The region spanning 60–166 is the THUMP domain; it reads QKICAMLINI…DNQLFIIIKR (107 aa). Residues 184 to 185, lysine 266, glycine 288, and glutamine 297 contribute to the ATP site; that span reads LI. A disulfide bridge connects residues cysteine 345 and cysteine 458. The 79-residue stretch at 406–484 folds into the Rhodanese domain; it reads LDSTDVVLDI…GFSNVKIYRP (79 aa). Cysteine 458 serves as the catalytic Cysteine persulfide intermediate.

This sequence belongs to the ThiI family.

It localises to the cytoplasm. It catalyses the reaction [ThiI sulfur-carrier protein]-S-sulfanyl-L-cysteine + a uridine in tRNA + 2 reduced [2Fe-2S]-[ferredoxin] + ATP + H(+) = [ThiI sulfur-carrier protein]-L-cysteine + a 4-thiouridine in tRNA + 2 oxidized [2Fe-2S]-[ferredoxin] + AMP + diphosphate. The enzyme catalyses [ThiS sulfur-carrier protein]-C-terminal Gly-Gly-AMP + S-sulfanyl-L-cysteinyl-[cysteine desulfurase] + AH2 = [ThiS sulfur-carrier protein]-C-terminal-Gly-aminoethanethioate + L-cysteinyl-[cysteine desulfurase] + A + AMP + 2 H(+). It participates in cofactor biosynthesis; thiamine diphosphate biosynthesis. Functionally, catalyzes the ATP-dependent transfer of a sulfur to tRNA to produce 4-thiouridine in position 8 of tRNAs, which functions as a near-UV photosensor. Also catalyzes the transfer of sulfur to the sulfur carrier protein ThiS, forming ThiS-thiocarboxylate. This is a step in the synthesis of thiazole, in the thiamine biosynthesis pathway. The sulfur is donated as persulfide by IscS. This chain is tRNA sulfurtransferase, found in Blochmanniella pennsylvanica (strain BPEN).